Here is a 492-residue protein sequence, read N- to C-terminus: Cytochrome P450 2A2 (492 aa).

C437 serves as a coordination point for heme.

This sequence belongs to the cytochrome P450 family. The cofactor is heme. As to expression, liver specific.

It localises to the endoplasmic reticulum membrane. Its subcellular location is the microsome membrane. It catalyses the reaction an organic molecule + reduced [NADPH--hemoprotein reductase] + O2 = an alcohol + oxidized [NADPH--hemoprotein reductase] + H2O + H(+). Highly active in the 15-alpha-hydroxylation of testosterone. This Rattus norvegicus (Rat) protein is Cytochrome P450 2A2 (Cyp2a2).